Reading from the N-terminus, the 335-residue chain is Transmembrane protein 120B-A (335 aa).

The stretch at Met1–Leu40 forms a coiled coil. 6 consecutive transmembrane segments (helical) span residues Gly100–Ala122, Phe130–Asn150, Val157–Ile177, Val193–Phe213, Phe268–Phe288, and Gln300–Leu320.

The protein belongs to the TMEM120 family.

It is found in the nucleus inner membrane. Functionally, necessary for efficient adipogenesis. Does not show ion channel activity. The polypeptide is Transmembrane protein 120B-A (tmem120b-a) (Xenopus laevis (African clawed frog)).